A 178-amino-acid chain; its full sequence is NADH-quinone oxidoreductase subunit I (178 aa).

4Fe-4S ferredoxin-type domains follow at residues 45–74 (RHPDTGLEKCIGCSLCAAACPAYAIYVEAA) and 90–119 (KVYEINMLRCIFCGLCEEACPTGAVVLGNE). Residues cysteine 54, cysteine 57, cysteine 60, cysteine 64, cysteine 99, cysteine 102, cysteine 105, and cysteine 109 each coordinate [4Fe-4S] cluster.

This sequence belongs to the complex I 23 kDa subunit family. NDH-1 is composed of 15 different subunits. Subunits NuoA, H, J, K, L, M, N constitute the membrane sector of the complex. [4Fe-4S] cluster serves as cofactor.

The protein localises to the cell membrane. It carries out the reaction a quinone + NADH + 5 H(+)(in) = a quinol + NAD(+) + 4 H(+)(out). NDH-1 shuttles electrons from NADH, via FMN and iron-sulfur (Fe-S) centers, to quinones in the respiratory chain. The immediate electron acceptor for the enzyme in this species is believed to be ubiquinone. Couples the redox reaction to proton translocation (for every two electrons transferred, four hydrogen ions are translocated across the cytoplasmic membrane), and thus conserves the redox energy in a proton gradient. In Deinococcus radiodurans (strain ATCC 13939 / DSM 20539 / JCM 16871 / CCUG 27074 / LMG 4051 / NBRC 15346 / NCIMB 9279 / VKM B-1422 / R1), this protein is NADH-quinone oxidoreductase subunit I.